We begin with the raw amino-acid sequence, 164 residues long: Large ribosomal subunit protein uL10 (164 aa).

It belongs to the universal ribosomal protein uL10 family. As to quaternary structure, part of the ribosomal stalk of the 50S ribosomal subunit. The N-terminus interacts with L11 and the large rRNA to form the base of the stalk. The C-terminus forms an elongated spine to which L12 dimers bind in a sequential fashion forming a multimeric L10(L12)X complex.

Forms part of the ribosomal stalk, playing a central role in the interaction of the ribosome with GTP-bound translation factors. The protein is Large ribosomal subunit protein uL10 of Helicobacter pylori (strain HPAG1).